We begin with the raw amino-acid sequence, 122 residues long: Acidic phospholipase A2 CTs-A3 (122 aa).

7 cysteine pairs are disulfide-bonded: C26–C116, C28–C44, C43–C95, C49–C122, C50–C88, C57–C81, and C75–C86. Positions 27, 29, and 31 each coordinate Ca(2+). Residue H47 is part of the active site. Position 48 (D48) interacts with Ca(2+). D89 is an active-site residue.

The cofactor is Ca(2+). Expressed by the venom gland.

The protein resides in the secreted. The enzyme catalyses a 1,2-diacyl-sn-glycero-3-phosphocholine + H2O = a 1-acyl-sn-glycero-3-phosphocholine + a fatty acid + H(+). Snake venom phospholipase A2 (PLA2) that shows a moderate inhibition of ADP-induced human platelet aggregation when tested on platelet rich plasma. Exhibits moderate hydrolytic activities and prefers the anionic micelles (dPPC with deoxycholate) to the zwitterionic micelles (dPPC with Triton X-100). PLA2 catalyzes the calcium-dependent hydrolysis of the 2-acyl groups in 3-sn-phosphoglycerides. The protein is Acidic phospholipase A2 CTs-A3 of Trimeresurus stejnegeri (Chinese green tree viper).